The sequence spans 256 residues: Cell division protein ZipA (256 aa).

The Periplasmic segment spans residues 1–6; it reads MQYGRQ. A helical membrane pass occupies residues 7-27; that stretch reads ILICIGILTVIILLLYGLLNS. Over 28-256 the chain is Cytoplasmic; sequence YWDRTVTFCK…RHVLSANKST (229 aa).

Belongs to the ZipA family. In terms of assembly, interacts with FtsZ via their C-terminal domains.

Its subcellular location is the cell inner membrane. In terms of biological role, essential cell division protein that stabilizes the FtsZ protofilaments by cross-linking them and that serves as a cytoplasmic membrane anchor for the Z ring. Also required for the recruitment to the septal ring of downstream cell division proteins. In Baumannia cicadellinicola subsp. Homalodisca coagulata, this protein is Cell division protein ZipA.